The sequence spans 406 residues: Tryptophan synthase beta chain (406 aa).

K99 bears the N6-(pyridoxal phosphate)lysine mark.

It belongs to the TrpB family. Tetramer of two alpha and two beta chains. The cofactor is pyridoxal 5'-phosphate.

It catalyses the reaction (1S,2R)-1-C-(indol-3-yl)glycerol 3-phosphate + L-serine = D-glyceraldehyde 3-phosphate + L-tryptophan + H2O. Its pathway is amino-acid biosynthesis; L-tryptophan biosynthesis; L-tryptophan from chorismate: step 5/5. Its function is as follows. The beta subunit is responsible for the synthesis of L-tryptophan from indole and L-serine. The polypeptide is Tryptophan synthase beta chain (Allorhizobium ampelinum (strain ATCC BAA-846 / DSM 112012 / S4) (Agrobacterium vitis (strain S4))).